The primary structure comprises 145 residues: D-aminoacyl-tRNA deacylase (145 aa).

The short motif at G137 to P138 is the Gly-cisPro motif, important for rejection of L-amino acids element.

This sequence belongs to the DTD family. Homodimer.

The protein resides in the cytoplasm. It carries out the reaction glycyl-tRNA(Ala) + H2O = tRNA(Ala) + glycine + H(+). The catalysed reaction is a D-aminoacyl-tRNA + H2O = a tRNA + a D-alpha-amino acid + H(+). An aminoacyl-tRNA editing enzyme that deacylates mischarged D-aminoacyl-tRNAs. Also deacylates mischarged glycyl-tRNA(Ala), protecting cells against glycine mischarging by AlaRS. Acts via tRNA-based rather than protein-based catalysis; rejects L-amino acids rather than detecting D-amino acids in the active site. By recycling D-aminoacyl-tRNA to D-amino acids and free tRNA molecules, this enzyme counteracts the toxicity associated with the formation of D-aminoacyl-tRNA entities in vivo and helps enforce protein L-homochirality. This chain is D-aminoacyl-tRNA deacylase, found in Ectopseudomonas mendocina (strain ymp) (Pseudomonas mendocina).